The sequence spans 3176 residues: Large tegument protein deneddylase (3176 aa).

The span at 1 to 12 (MSNGDWGQSQRP) shows a compositional bias: polar residues. Positions 1 to 28 (MSNGDWGQSQRPRGTGPMRGIRTMDVNA) are disordered. Positions 1–268 (MSNGDWGQSQ…YEANGSGFDL (268 aa)) are deubiquitination activity. The region spanning 41–258 (LGTASCNQAH…MLEHYGVYDF (218 aa)) is the Peptidase C76 domain. Catalysis depends on residues Cys61, Asp193, and His195. Positions 319-342 (PAARYSPAKTNSPPPSPASAAPAS) are disordered. 5 tandem repeats follow at residues 335-339 (PASAA), 340-344 (PASAA), 345-349 (PASAA), 350-354 (PASAA), and 355-359 (PASAA). The segment at 335 to 384 (PASAAPASAAPASAAPASAAPASAAQASVAPASVAPASAAPASAAPDSAA) is 10 X 5 AA approximate repeats of P-A-S-A-A. A 6; approximate repeat occupies 360–364 (QASVA). The stretch at 365 to 369 (PASVA) is one 7; approximate repeat. 2 repeat units span residues 370-374 (PASAA) and 375-379 (PASAA). A compositionally biased stretch (low complexity) spans 376–386 (ASAAPDSAAPA). Disordered regions lie at residues 376 to 683 (ASAA…GSGL), 928 to 950 (LLSG…SIYR), 1170 to 1193 (APIS…TPPL), 1435 to 1461 (LMET…RARE), 2610 to 3008 (GLVS…PGAR), and 3023 to 3043 (TYTV…KMPK). The stretch at 380 to 384 (PDSAA) is one 10; approximate repeat. Residues 457–488 (PRPPVPPHRPPSAARLPPPVIPIPHQSPPASP) show a composition bias toward pro residues. The span at 519–546 (AAPSNPEIPLTTPSPSPTAAAAPTATTL) shows a compositional bias: low complexity. Over residues 579–636 (APSPLLPQQQPPPSAAPAPSPLLPQQQPPPSAARAPSPLPPQQQPLPSATPAPPPAQQ) the composition is skewed to pro residues. The interval 581–611 (SPLLPQQQPPPSAAPAPSPLLPQQQPPPSAA) is interaction with inner tegument protein. The span at 1170 to 1182 (APISPASPSATPA) shows a compositional bias: low complexity. Positions 2619 to 2630 (SADNTPASSDRL) are enriched in polar residues. Positions 2643–2654 (EGSTTAESEASG) are enriched in low complexity. A compositionally biased stretch (pro residues) spans 2738-2747 (QPAPQQPPSS). 2 stretches are compositionally biased toward polar residues: residues 2761 to 2772 (SPHSTPSTASGS) and 2811 to 2831 (SAAS…SSQD). Basic and acidic residues predominate over residues 2839-2854 (MQREKKQQGGREEAAE). Composition is skewed to low complexity over residues 2872 to 2886 (APVV…ATPA) and 2901 to 2912 (APALGSGLAAPA).

This sequence belongs to the herpesviridae large tegument protein family. Interacts with host CUL1 and CUL4A; these interactions inhibit the E3 ligase activity of cullins. Interacts with inner tegument protein. Interacts with capsid vertex specific component CVC2. Interacts with the major capsid protein/MCP. Interacts with host TRIM25 and YWHAZ.

The protein resides in the virion tegument. It is found in the host cytoplasm. It localises to the host nucleus. The catalysed reaction is Thiol-dependent hydrolysis of ester, thioester, amide, peptide and isopeptide bonds formed by the C-terminal Gly of ubiquitin (a 76-residue protein attached to proteins as an intracellular targeting signal).. Its function is as follows. Large tegument protein that plays multiple roles in the viral cycle. During viral entry, remains associated with the capsid while most of the tegument is detached and participates in the capsid transport toward the host nucleus. Plays a role in the routing of the capsid at the nuclear pore complex and subsequent uncoating. Within the host nucleus, acts as a deneddylase and promotes the degradation of nuclear CRLs (cullin-RING ubiquitin ligases) and thereby stabilizes nuclear CRL substrates, while cytoplasmic CRLs remain unaffected. These modifications prevent host cell cycle S-phase progression and create a favorable environment allowing efficient viral genome replication. Participates later in the secondary envelopment of capsids. Indeed, plays a linker role for the association of the outer viral tegument to the capsids together with the inner tegument protein. Counteracts host TLR-mediated NF-kappa-B activation through both MYD88 and TICAM1-dependent pathways by interfering with 'Lys-63'- and 'Lys-48'-linked ubiquitination of signaling intermediates such as TRAF6 and IKBKG. Inhibits type I interferon production by forming a tri-molecular complex with host TRIM25 and 14-3-3 thereby promoting TRIM25 autoubiquitination and sequestration of the ligase into inactive protein aggregates. In turn, host RIGI is recruited to the complex but ubiquitination is severely impaired leading to inhibition of the pathway. Also catalyzes the removal of 'Lys-48'- and 'Lys-63'-linked ubiquitin chains on host TBK1 and STING1 suppressing cGAS-STING signaling in addition to the RIGI-MAVS pathway. Inhibits selective autophagy by deubiquitinating host SQSTM1. In turn, decreased SQSTM1 ubiquitination fails to recruit LC3 to SQSTM1-positive aggregates. In the host nucleus, deubiquitinates topoisomerase II subunits TOP2A and TOP2B thereby stabilizing SUMOylated TOP2 which halts the DNA damage response to TOP2-induced double strand DNA breaks and promotes cell survival. This Homo sapiens (Human) protein is Large tegument protein deneddylase.